The following is a 193-amino-acid chain: Putative manganese efflux pump MntP (193 aa).

Transmembrane regions (helical) follow at residues 3 to 23 (PLSI…AAIG), 37 to 57 (VRAG…GWML), 66 to 86 (AAFD…HMIV), 109 to 131 (LALA…SLAF), 146 to 166 (CTLS…ALIG), and 171 to 191 (ILGG…HLSG).

It belongs to the MntP (TC 9.B.29) family.

It is found in the cell inner membrane. In terms of biological role, probably functions as a manganese efflux pump. In Xanthomonas campestris pv. campestris (strain 8004), this protein is Putative manganese efflux pump MntP.